The sequence spans 443 residues: Glutamate--tRNA ligase 1 (443 aa).

The short motif at proline 7–asparagine 17 is the 'HIGH' region element. The 'KMSKS' region signature appears at lysine 236–arginine 240. Lysine 239 is an ATP binding site.

The protein belongs to the class-I aminoacyl-tRNA synthetase family. Glutamate--tRNA ligase type 1 subfamily. As to quaternary structure, monomer.

Its subcellular location is the cytoplasm. The catalysed reaction is tRNA(Glu) + L-glutamate + ATP = L-glutamyl-tRNA(Glu) + AMP + diphosphate. In terms of biological role, catalyzes the attachment of glutamate to tRNA(Glu) in a two-step reaction: glutamate is first activated by ATP to form Glu-AMP and then transferred to the acceptor end of tRNA(Glu). This chain is Glutamate--tRNA ligase 1, found in Ehrlichia chaffeensis (strain ATCC CRL-10679 / Arkansas).